The sequence spans 436 residues: Na(+)/H(+) antiporter NhaA (436 aa).

The next 11 helical transmembrane spans lie at 31–51 (VGGALLLAATIAALIWANSPG), 74–94 (LSLGAWASDGLLAIFFFIAGL), 112–132 (IVPIAAAIGGVAVPAIIYTLI), 143–163 (GWAIPTATDIAFALAVLAVIS), 173–193 (FLLTLAVVDDLIAISIIAVFY), 196–216 (NLQPQYLALALIPLGLFTWAV), 222–242 (SWYLLLPLAIITWVLVHESGV), 285–305 (VAVPIFAFFSAGVAIGGWAGF), 315–335 (IGIIAALILGKAIGIFGATFL), 350–370 (WIDVLGLAILAGIGFTVSLLI), and 384–404 (HAKVAILTASLVAALLATVIL).

It belongs to the NhaA Na(+)/H(+) (TC 2.A.33) antiporter family.

It is found in the cell membrane. The enzyme catalyses Na(+)(in) + 2 H(+)(out) = Na(+)(out) + 2 H(+)(in). In terms of biological role, na(+)/H(+) antiporter that extrudes sodium in exchange for external protons. This chain is Na(+)/H(+) antiporter NhaA, found in Renibacterium salmoninarum (strain ATCC 33209 / DSM 20767 / JCM 11484 / NBRC 15589 / NCIMB 2235).